The sequence spans 350 residues: 26S proteasome non-ATPase regulatory subunit 8 (350 aa).

The segment at 1–24 (MFIKGRAPRAPPRERRRATRGGLR) is disordered. Ser106 carries the post-translational modification Phosphoserine. One can recognise a PCI domain in the interval 162–331 (PSFERYMAQL…QQKPEDTTIP (170 aa)). Lys297 participates in a covalent cross-link: Glycyl lysine isopeptide (Lys-Gly) (interchain with G-Cter in SUMO2).

Belongs to the proteasome subunit S14 family. As to quaternary structure, component of the 19S proteasome regulatory particle complex. The 26S proteasome consists of a 20S core particle (CP) and two 19S regulatory subunits (RP). The regulatory particle is made of a lid composed of 9 subunits including PSMD8, a base containing 6 ATPases and few additional components. Interacts with DDI2. Interacts with TASOR.

Component of the 26S proteasome, a multiprotein complex involved in the ATP-dependent degradation of ubiquitinated proteins. This complex plays a key role in the maintenance of protein homeostasis by removing misfolded or damaged proteins, which could impair cellular functions, and by removing proteins whose functions are no longer required. Therefore, the proteasome participates in numerous cellular processes, including cell cycle progression, apoptosis, or DNA damage repair. In Homo sapiens (Human), this protein is 26S proteasome non-ATPase regulatory subunit 8 (PSMD8).